Consider the following 109-residue polypeptide: Cell division suppressor protein YneA (109 aa).

In terms of domain architecture, LysM spans 39-90 (SEVNVSEGDSLWALADQYAGKSDMAKADFVSWVEKENNLADGHVEAGESVVI).

Belongs to the YneA family.

It is found in the cytoplasm. Its function is as follows. Inhibits cell division during the SOS response. Affects a later stage of the cell division protein assembly, after the assembly of the Z ring, by probably suppressing recruitment of FtsL and/or DivIC to the division machinery. The chain is Cell division suppressor protein YneA from Listeria monocytogenes serotype 4b (strain F2365).